We begin with the raw amino-acid sequence, 127 residues long: MNTPKELRYTKEHEWVRVEGENVRIGITDYAQSELGDIVFVELPEVGAEVTANEPFGSVESVKTVSELYAPISGTVVEVNEALNDHPEYVNESPYDKAWMIVVKPNDLSEIDNLLTAEQYEAMINEG.

The Lipoyl-binding domain occupies Asn-22–Lys-104. Lys-63 carries the post-translational modification N6-lipoyllysine.

It belongs to the GcvH family. In terms of assembly, the glycine cleavage system is composed of four proteins: P, T, L and H. It depends on (R)-lipoate as a cofactor.

Its function is as follows. The glycine cleavage system catalyzes the degradation of glycine. The H protein shuttles the methylamine group of glycine from the P protein to the T protein. Functionally, is also involved in protein lipoylation via its role as an octanoyl/lipoyl carrier protein intermediate. The sequence is that of Glycine cleavage system H protein from Geobacillus kaustophilus (strain HTA426).